Here is an 89-residue protein sequence, read N- to C-terminus: Small ribosomal subunit protein uS17 (89 aa).

It belongs to the universal ribosomal protein uS17 family. In terms of assembly, part of the 30S ribosomal subunit.

Its function is as follows. One of the primary rRNA binding proteins, it binds specifically to the 5'-end of 16S ribosomal RNA. The chain is Small ribosomal subunit protein uS17 from Verminephrobacter eiseniae (strain EF01-2).